The primary structure comprises 141 residues: Hemoglobin subunit alpha (141 aa).

The region spanning 1–141 (VLSDEDKTNV…VSTVLTSKYR (141 aa)) is the Globin domain. Serine 3 carries the phosphoserine modification. Residue lysine 7 is modified to N6-succinyllysine. Phosphothreonine is present on threonine 8. Lysine 11 is modified (N6-succinyllysine). Lysine 16 carries the N6-acetyllysine; alternate modification. Lysine 16 is modified (N6-succinyllysine; alternate). A Phosphotyrosine modification is found at tyrosine 24. At serine 35 the chain carries Phosphoserine. At lysine 40 the chain carries N6-succinyllysine. The residue at position 49 (serine 49) is a Phosphoserine. Histidine 58 contacts O2. Residue histidine 87 coordinates heme b. Serine 102 carries the phosphoserine modification. Threonine 108 is subject to Phosphothreonine. Phosphoserine occurs at positions 124 and 131. Residues threonine 134 and threonine 137 each carry the phosphothreonine modification. Serine 138 is modified (phosphoserine).

The protein belongs to the globin family. As to quaternary structure, heterotetramer of two alpha chains and two beta chains. In terms of tissue distribution, red blood cells.

Functionally, involved in oxygen transport from the lung to the various peripheral tissues. In terms of biological role, hemopressin acts as an antagonist peptide of the cannabinoid receptor CNR1. Hemopressin-binding efficiently blocks cannabinoid receptor CNR1 and subsequent signaling. The protein is Hemoglobin subunit alpha (HBA) of Trichechus inunguis (Amazon manatee).